The following is a 370-amino-acid chain: Dihydroorotate dehydrogenase (quinone) (370 aa).

Residues 80–84 (AGFDK) and Thr104 contribute to the FMN site. Lys84 is a binding site for substrate. 129-133 (NRMGF) contacts substrate. 2 residues coordinate FMN: Asn157 and Asn190. Residue Asn190 participates in substrate binding. Ser193 (nucleophile) is an active-site residue. Substrate is bound at residue Asn195. FMN-binding residues include Lys226 and Thr254. Residue 255 to 256 (NT) participates in substrate binding. FMN is bound by residues Gly278, Gly307, and 328–329 (YT).

Belongs to the dihydroorotate dehydrogenase family. Type 2 subfamily. As to quaternary structure, monomer. Requires FMN as cofactor.

The protein localises to the cell membrane. The catalysed reaction is (S)-dihydroorotate + a quinone = orotate + a quinol. The protein operates within pyrimidine metabolism; UMP biosynthesis via de novo pathway; orotate from (S)-dihydroorotate (quinone route): step 1/1. Functionally, catalyzes the conversion of dihydroorotate to orotate with quinone as electron acceptor. The sequence is that of Dihydroorotate dehydrogenase (quinone) from Mycolicibacterium paratuberculosis (strain ATCC BAA-968 / K-10) (Mycobacterium paratuberculosis).